The sequence spans 192 residues: Small ribosomal subunit protein uS4c-2 (192 aa).

The 65-residue stretch at 91–155 folds into the S4 RNA-binding domain; the sequence is TRLDHLVYRA…PKPPEYLPPY (65 aa).

This sequence belongs to the universal ribosomal protein uS4 family. As to quaternary structure, part of the 30S ribosomal subunit. Contacts protein S5. The interaction surface between S4 and S5 is involved in control of translational fidelity.

It is found in the plastid. It localises to the chloroplast. Functionally, one of the primary rRNA binding proteins, it binds directly to 16S rRNA where it nucleates assembly of the body of the 30S subunit. With S5 and S12 plays an important role in translational accuracy. The protein is Small ribosomal subunit protein uS4c-2 of Cyanidium caldarium (Red alga).